The primary structure comprises 76 residues: Small ribosomal subunit protein bS18 (76 aa).

Belongs to the bacterial ribosomal protein bS18 family. Part of the 30S ribosomal subunit. Forms a tight heterodimer with protein bS6.

Its function is as follows. Binds as a heterodimer with protein bS6 to the central domain of the 16S rRNA, where it helps stabilize the platform of the 30S subunit. This chain is Small ribosomal subunit protein bS18, found in Pelotomaculum thermopropionicum (strain DSM 13744 / JCM 10971 / SI).